Here is an 849-residue protein sequence, read N- to C-terminus: Formin-like protein 4 (849 aa).

An N-terminal signal peptide occupies residues 1–22 (MPPTLALLLFLALSAVAAVGGA). The interval 36–104 (IEWTPPPSTA…RARGGGGGGT (69 aa)) is disordered. A compositionally biased stretch (pro residues) spans 38–52 (WTPPPSTASPSPPSP). Residues 53–64 (DFSSDPSTPATP) show a composition bias toward low complexity. A helical transmembrane segment spans residues 109-129 (IVVASAAAAAVLALLAFAAAF). The span at 185-194 (ARRGMCRDVD) shows a compositional bias: basic and acidic residues. A disordered region spans residues 185–364 (ARRGMCRDVD…PEPPTGPVSA (180 aa)). Over residues 234–246 (GSGGGGGGEGGGT) the composition is skewed to gly residues. The span at 247–279 (WSEASASSPRTTTASRRSLPSLTSDFFPTTPAA) shows a compositional bias: low complexity. Pro residues-rich tracts occupy residues 280–297 (APVP…PPAP), 324–339 (PSNP…PPPS), and 346–360 (PKPP…PPTG). The region spanning 406 to 823 (EAAGDEPRPK…SARSFRISAA (418 aa)) is the FH2 domain.

This sequence belongs to the formin-like family. Class-I subfamily.

The protein localises to the membrane. In Oryza sativa subsp. japonica (Rice), this protein is Formin-like protein 4 (FH4).